The chain runs to 258 residues: Imidazole glycerol phosphate synthase subunit HisF (258 aa).

Active-site residues include Asp11 and Asp130.

It belongs to the HisA/HisF family. Heterodimer of HisH and HisF.

Its subcellular location is the cytoplasm. It catalyses the reaction 5-[(5-phospho-1-deoxy-D-ribulos-1-ylimino)methylamino]-1-(5-phospho-beta-D-ribosyl)imidazole-4-carboxamide + L-glutamine = D-erythro-1-(imidazol-4-yl)glycerol 3-phosphate + 5-amino-1-(5-phospho-beta-D-ribosyl)imidazole-4-carboxamide + L-glutamate + H(+). Its pathway is amino-acid biosynthesis; L-histidine biosynthesis; L-histidine from 5-phospho-alpha-D-ribose 1-diphosphate: step 5/9. Its function is as follows. IGPS catalyzes the conversion of PRFAR and glutamine to IGP, AICAR and glutamate. The HisF subunit catalyzes the cyclization activity that produces IGP and AICAR from PRFAR using the ammonia provided by the HisH subunit. This is Imidazole glycerol phosphate synthase subunit HisF from Gluconacetobacter diazotrophicus (strain ATCC 49037 / DSM 5601 / CCUG 37298 / CIP 103539 / LMG 7603 / PAl5).